A 289-amino-acid chain; its full sequence is MYG1 protein CT_386 (289 aa).

It belongs to the MYG1 family.

The polypeptide is MYG1 protein CT_386 (Chlamydia trachomatis serovar D (strain ATCC VR-885 / DSM 19411 / UW-3/Cx)).